Here is a 254-residue protein sequence, read N- to C-terminus: Alcohol dehydrogenase 2 (254 aa).

Residue 10 to 33 participates in NAD(+) binding; sequence FVAGLGGIGFDTSREIVKSGPKNL. S138 contacts substrate. The active-site Proton acceptor is Y151.

It belongs to the short-chain dehydrogenases/reductases (SDR) family. As to quaternary structure, homodimer.

It carries out the reaction a primary alcohol + NAD(+) = an aldehyde + NADH + H(+). The enzyme catalyses a secondary alcohol + NAD(+) = a ketone + NADH + H(+). The polypeptide is Alcohol dehydrogenase 2 (Adh2) (Drosophila wheeleri (Fruit fly)).